A 431-amino-acid polypeptide reads, in one-letter code: Enolase (431 aa).

Gln-166 provides a ligand contact to (2R)-2-phosphoglycerate. Residue Glu-208 is the Proton donor of the active site. Residues Asp-245, Glu-288, and Asp-315 each contribute to the Mg(2+) site. (2R)-2-phosphoglycerate contacts are provided by Lys-340, Arg-369, Ser-370, and Lys-391. The active-site Proton acceptor is Lys-340.

It belongs to the enolase family. Mg(2+) serves as cofactor.

The protein resides in the cytoplasm. Its subcellular location is the secreted. It is found in the cell surface. It catalyses the reaction (2R)-2-phosphoglycerate = phosphoenolpyruvate + H2O. The protein operates within carbohydrate degradation; glycolysis; pyruvate from D-glyceraldehyde 3-phosphate: step 4/5. In terms of biological role, catalyzes the reversible conversion of 2-phosphoglycerate (2-PG) into phosphoenolpyruvate (PEP). It is essential for the degradation of carbohydrates via glycolysis. In Clostridium botulinum (strain Loch Maree / Type A3), this protein is Enolase.